The following is a 299-amino-acid chain: Release factor glutamine methyltransferase (299 aa).

S-adenosyl-L-methionine-binding positions include 134–138, Asp-157, Trp-186, and Asn-203; that span reads GTGSG. 203 to 206 contributes to the substrate binding site; it reads NPPY.

The protein belongs to the protein N5-glutamine methyltransferase family. PrmC subfamily.

It carries out the reaction L-glutaminyl-[peptide chain release factor] + S-adenosyl-L-methionine = N(5)-methyl-L-glutaminyl-[peptide chain release factor] + S-adenosyl-L-homocysteine + H(+). Its function is as follows. Methylates the class 1 translation termination release factors RF1/PrfA and RF2/PrfB on the glutamine residue of the universally conserved GGQ motif. In Synechocystis sp. (strain ATCC 27184 / PCC 6803 / Kazusa), this protein is Release factor glutamine methyltransferase.